The primary structure comprises 1483 residues: Cystic fibrosis transmembrane conductance regulator (1483 aa).

The Cytoplasmic portion of the chain corresponds to 1 to 77 (MQRSPLEKAS…KLINALRRCF (77 aa)). The helical transmembrane segment at 78 to 98 (FWKFMFYGILLYLGEVTKAVQ) threads the bilayer. Positions 81–365 (FMFYGILLYL…WAVQTWYDSL (285 aa)) constitute an ABC transmembrane type-1 1 domain. The Extracellular portion of the chain corresponds to 99-122 (PLLLGRIIASYDPDNKVERSIAIY). A helical membrane pass occupies residues 123–146 (LGIGLCLLFVVRTLLLHPAIFGLH). The Cytoplasmic portion of the chain corresponds to 147-195 (HIGMQMRIAMFSLIYKKTLKLSSRVLDKISIGQLISLLSNNLNKFDEGL). The chain crosses the membrane as a helical span at residues 196 to 216 (ALAHFVWIVPLQVTLLMGLLW). Residues 217–222 (ELLQAS) lie on the Extracellular side of the membrane. A helical membrane pass occupies residues 223 to 243 (AFCGLAFLIIVAFYQAGLGRM). The Cytoplasmic portion of the chain corresponds to 244-298 (MMKYRDKRGGKINERLVITSEMIENIQSVKAYCWEEAMEKMIENLRQTELKLTRK). Residues 299-319 (AAYVRYCNSSAFFFSGFFVVF) traverse the membrane as a helical segment. Residues 320–339 (LSVLPYALMKGIILRKIFTT) lie on the Extracellular side of the membrane. The chain crosses the membrane as a helical span at residues 340–358 (ISFCIVLRMAVTRQFPWAV). Residues 359–859 (QTWYDSLGAI…YLRYITIHKS (501 aa)) lie on the Cytoplasmic side of the membrane. ATP contacts are provided by residues tryptophan 401, serine 434, 458-465 (GSTGAGKT), and glutamine 493. Residues 423-646 (NGDNSLFFSN…RPDFSSKLMG (224 aa)) enclose the ABC transporter 1 domain. Cysteine 524 carries S-palmitoyl cysteine lipidation. Residues serine 549 and serine 660 each carry the phosphoserine modification. Residues 654-832 (SAERRNSILT…EEINEEDLKE (179 aa)) are disordered R region. Serine 670 carries the post-translational modification Phosphoserine; by PKA. At serine 686 the chain carries Phosphoserine. Residue lysine 688 forms a Glycyl lysine isopeptide (Lys-Gly) (interchain with G-Cter in ubiquitin) linkage. Phosphoserine is present on residues serine 700 and serine 712. Threonine 717 carries the phosphothreonine modification. Residues serine 737, serine 768, serine 791, serine 796, and serine 814 each carry the phosphoserine modification. A helical transmembrane segment spans residues 860–880 (LIFVLIWCLIIFLAEVAVSLV). The ABC transmembrane type-1 2 domain occupies 860–1157 (LIFVLIWCLI…AVNSSIDVDS (298 aa)). Topologically, residues 881–920 (FLLLFEKSPRQDTGNVTKSSNNSSYGVIITNTSSYYIIYI) are extracellular. 4 N-linked (GlcNAc...) asparagine glycosylation sites follow: asparagine 895, asparagine 901, asparagine 902, and asparagine 911. Residues 921 to 941 (YVGVADTLLALGLLRGLPLVH) form a discontinuously helical membrane-spanning segment. Over 942–992 (TLITASKILHHKMLHSVLQAPMSTLNTLKAGGILNRFSKDIAILDDLLPLT) the chain is Cytoplasmic. A helical transmembrane segment spans residues 993–1013 (IFDFIQLILIVIGAVIVVSVL). The Extracellular portion of the chain corresponds to 1014 to 1015 (EP). A helical transmembrane segment spans residues 1016–1036 (YIFLATVPVIIAFVMLRAYFL). Topologically, residues 1037–1097 (HTSQQLKQLE…TANWFLYLST (61 aa)) are cytoplasmic. A helical transmembrane segment spans residues 1098 to 1118 (LRWFQMRIEMIFVIFFIAVTF). Topologically, residues 1119–1132 (ISILTTGDGEGRVG) are extracellular. A helical transmembrane segment spans residues 1133-1153 (IILTLAMNIMNTLQWAVNSSI). The Cytoplasmic segment spans residues 1154-1483 (DVDSLMRSVS…TEEEVQETRL (330 aa)). The 234-residue stretch at 1213–1446 (MTVKDLTAKY…KSLFRQAISN (234 aa)) folds into the ABC transporter 2 domain. Residues tyrosine 1222 and 1247–1254 (GRTGSGKS) each bind ATP. The tract at residues 1389 to 1483 (RTIKQAFADC…TEEEVQETRL (95 aa)) is interaction with GORASP2. The S-palmitoyl cysteine moiety is linked to residue cysteine 1398. 2 positions are modified to phosphoserine: serine 1447 and serine 1459. Residues 1455–1465 (HRNSSKHKSRS) are compositionally biased toward basic residues. The disordered stretch occupies residues 1455–1483 (HRNSSKHKSRSKIAALKEETEEEVQETRL). The segment covering 1473-1483 (ETEEEVQETRL) has biased composition (acidic residues). A PDZ-binding motif is present at residues 1481 to 1483 (TRL).

Belongs to the ABC transporter superfamily. ABCC family. CFTR transporter (TC 3.A.1.202) subfamily. Monomer; does not require oligomerization for channel activity. May form oligomers in the membrane. Interacts with SLC26A3, SLC26A6 and NHERF1. Interacts with SHANK2. Interacts with MYO6. Interacts (via C-terminus) with GOPC (via PDZ domain); this promotes CFTR internalization and thereby decreases channel activity. Interacts with SLC4A7 through NHERF1. Found in a complex with MYO5B and RAB11A. Interacts with ANO1. Interacts with SLC26A8. Interacts with AHCYL1; the interaction increases CFTR activity. Interacts with CSE1L. The core-glycosylated form interacts with GORASP2 (via PDZ GRASP-type 1 domain) in respone to ER stress. Interacts with MARCHF2; the interaction leads to CFTR ubiqtuitination and degradation. Interacts with ADGRG2. Post-translationally, N-glycosylated. Phosphorylated; cAMP treatment promotes phosphorylation and activates the channel. Dephosphorylation decreases the ATPase activity (in vitro). Phosphorylation at PKA sites activates the channel. Phosphorylation at PKC sites enhances the response to phosphorylation by PKA. Phosphorylated by AMPK; this inhibits channel activity. In terms of processing, ubiquitinated, leading to its degradation in the lysosome. Deubiquitination by USP10 in early endosomes enhances its endocytic recycling to the cell membrane. Ubiquitinated by RNF185 during ER stress. Ubiquitinated by MARCHF2.

It is found in the apical cell membrane. Its subcellular location is the early endosome membrane. The protein resides in the cell membrane. It localises to the recycling endosome membrane. The protein localises to the endoplasmic reticulum membrane. It is found in the nucleus. It catalyses the reaction ATP + H2O + closed Cl(-) channel = ADP + phosphate + open Cl(-) channel.. It carries out the reaction chloride(in) = chloride(out). The catalysed reaction is hydrogencarbonate(in) = hydrogencarbonate(out). The enzyme catalyses ATP + H2O = ADP + phosphate + H(+). Its function is as follows. Epithelial ion channel that plays an important role in the regulation of epithelial ion and water transport and fluid homeostasis. Mediates the transport of chloride ions across the cell membrane. The ion channel is also permeable to HCO(3)(-); selectivity depends on the extracellular chloride concentration. Exerts its function also by modulating the activity of other ion channels and transporters. Contributes to the regulation of the pH and the ion content of the epithelial fluid layer. Modulates the activity of the epithelial sodium channel (ENaC) complex, in part by regulating the cell surface expression of the ENaC complex. May regulate bicarbonate secretion and salvage in epithelial cells by regulating the transporter SLC4A7. Can inhibit the chloride channel activity of ANO1. Plays a role in the chloride and bicarbonate homeostasis during sperm epididymal maturation and capacitation. The polypeptide is Cystic fibrosis transmembrane conductance regulator (Atelerix albiventris (Middle-African hedgehog)).